Here is a 427-residue protein sequence, read N- to C-terminus: GTPase Obg (427 aa).

In terms of domain architecture, Obg spans 1-158 (MFVDQVKIYV…RDVTLELKVL (158 aa)). The OBG-type G domain maps to 159–329 (ADVGLVGFPS…LLFEVANLLE (171 aa)). GTP-binding positions include 165–172 (GFPSVGKS), 190–194 (FTTIV), 212–215 (DLPG), 282–285 (NKMD), and 310–312 (SAV). Mg(2+) is bound by residues Ser172 and Thr192. One can recognise an OCT domain in the interval 349 to 427 (YKFESESNFE…ILEYQFEFID (79 aa)).

This sequence belongs to the TRAFAC class OBG-HflX-like GTPase superfamily. OBG GTPase family. In terms of assembly, monomer. Mg(2+) serves as cofactor.

The protein localises to the cytoplasm. Its function is as follows. An essential GTPase which binds GTP, GDP and possibly (p)ppGpp with moderate affinity, with high nucleotide exchange rates and a fairly low GTP hydrolysis rate. Plays a role in control of the cell cycle, stress response, ribosome biogenesis and in those bacteria that undergo differentiation, in morphogenesis control. This Bacillus mycoides (strain KBAB4) (Bacillus weihenstephanensis) protein is GTPase Obg.